The chain runs to 142 residues: Large ribosomal subunit protein uL11 (142 aa).

It belongs to the universal ribosomal protein uL11 family. In terms of assembly, part of the ribosomal stalk of the 50S ribosomal subunit. Interacts with L10 and the large rRNA to form the base of the stalk. L10 forms an elongated spine to which L12 dimers bind in a sequential fashion forming a multimeric L10(L12)X complex. In terms of processing, one or more lysine residues are methylated.

In terms of biological role, forms part of the ribosomal stalk which helps the ribosome interact with GTP-bound translation factors. This Bradyrhizobium sp. (strain ORS 278) protein is Large ribosomal subunit protein uL11.